A 489-amino-acid chain; its full sequence is N-succinylglutamate 5-semialdehyde dehydrogenase (489 aa).

Residue 223 to 228 (GSASTG) participates in NAD(+) binding. Catalysis depends on residues glutamate 246 and cysteine 280.

The protein belongs to the aldehyde dehydrogenase family. AstD subfamily.

It carries out the reaction N-succinyl-L-glutamate 5-semialdehyde + NAD(+) + H2O = N-succinyl-L-glutamate + NADH + 2 H(+). It participates in amino-acid degradation; L-arginine degradation via AST pathway; L-glutamate and succinate from L-arginine: step 4/5. Functionally, catalyzes the NAD-dependent reduction of succinylglutamate semialdehyde into succinylglutamate. In Acinetobacter baylyi (strain ATCC 33305 / BD413 / ADP1), this protein is N-succinylglutamate 5-semialdehyde dehydrogenase.